A 518-amino-acid chain; its full sequence is Arginyl-tRNA--protein transferase 1 (518 aa).

Residue serine 169 is modified to Phosphoserine. The tract at residues 175-203 (EKLGSGEPSHSVKVHTVPKPGKGADLSKP) is disordered.

Belongs to the R-transferase family. Monomer. Interacts with LIAT1; LIAT1 is not a substrate of ATE1, the interaction takes place in the cytoplasm and seems to increase ATE1 arginyltransferase activity.

The protein resides in the nucleus. It localises to the cytoplasm. It catalyses the reaction an N-terminal L-alpha-aminoacyl-[protein] + L-arginyl-tRNA(Arg) = an N-terminal L-arginyl-L-aminoacyl-[protein] + tRNA(Arg) + H(+). Its function is as follows. Involved in the post-translational conjugation of arginine to the N-terminal aspartate or glutamate of a protein. This arginylation is required for degradation of the protein via the ubiquitin pathway. Does not arginylate cysteine residues. This chain is Arginyl-tRNA--protein transferase 1, found in Homo sapiens (Human).